The sequence spans 828 residues: Glycerol-3-phosphate acyltransferase (828 aa).

Positions His310 to Asp315 match the HXXXXD motif motif.

It belongs to the GPAT/DAPAT family.

The protein localises to the cell inner membrane. It carries out the reaction sn-glycerol 3-phosphate + an acyl-CoA = a 1-acyl-sn-glycero-3-phosphate + CoA. It participates in phospholipid metabolism; CDP-diacylglycerol biosynthesis; CDP-diacylglycerol from sn-glycerol 3-phosphate: step 1/3. This chain is Glycerol-3-phosphate acyltransferase, found in Pseudomonas putida (strain ATCC 47054 / DSM 6125 / CFBP 8728 / NCIMB 11950 / KT2440).